A 521-amino-acid chain; its full sequence is GMC-type oxidoreductase acuG (521 aa).

FAD is bound by residues 14 to 15 (TV), 34 to 35 (EA), L82, 90 to 93 (NYGL), A492, and 503 to 504 (YQ).

Belongs to the GMC oxidoreductase family. It depends on FAD as a cofactor.

Its pathway is secondary metabolite biosynthesis. In terms of biological role, GMC-type oxidoreductase; part of the gene cluster that mediates the biosynthesis of aculins. The pathway begins with the synthesis of 6-methylsalicylic acid by the polyketide synthase (PKS) acuA via condensation of acetate and malonate units. The 6-methylsalicylic acid decarboxylase acuB then catalyzes the decarboxylation of 6-methylsalicylic acid to yield m-cresol (also known as 3-methylphenol). These first reactions occur in the cytosol. The intermediate m-cresol is then transported into the endoplasmic reticulum where the cytochrome P450 monooxygenase acuC converts it to m-hydroxybenzyl alcohol, which is further converted to gentisyl alcohol by the cytochrome P450 monooxygenase acuD. Gentisyl alcohol is further oxidized by the oxidoreductase acuE that probably catalyzes hydroxylation of the aromatic ring. The aromatic system might then be opened by oxidation through a Baeyer-Villiger type of oxidation, which could be catalyzed by acuF, with the carboxylic acid at C-1 subsequently reduced to an aldehyde by acuG. Subsequently, a hemiacetal is formed, before the dehydrogenase acuH would reduce the double bond between C-4 and C-6. Finally, keto-enol tautomerism results in formation of aculinic acid, which exists as two diastereomers (both R/S configurations at C-1) by non-enzymatic hemiacetal formation. The carboxypeptidase acuI could be involved in the linking of aculinic acid to an aculene A moiety produced by the aculene biosynthesis cluster and which leads to the production of aculin A. AcuI may also be involved in the attachment of proline to aculinic acid to form epi-aculins A and B. This is GMC-type oxidoreductase acuG from Aspergillus aculeatus (strain ATCC 16872 / CBS 172.66 / WB 5094).